Here is a 63-residue protein sequence, read N- to C-terminus: MRGTSFILFAVVVILGFLNANAEPLANPAPLANPDPLANPDPLANPEAFDLLGLVKKVASALG.

Residues 1 to 22 (MRGTSFILFAVVVILGFLNANA) form the signal peptide. 5 AXPX repeats span residues 22–25 (AEPL), 26–29 (ANPA), 32–35 (ANPD), 38–41 (ANPD), and 44–47 (ANPE). Positions 23–48 (EPLANPAPLANPDPLANPDPLANPEA) are excised as a propeptide. Residue leucine 62 is modified to Leucine amide.

Expressed by the venom gland.

It localises to the secreted. Its subcellular location is the target cell membrane. In terms of biological role, antimicrobial peptide. Shows activities against Gram-positive bacteria (S.aureus MIC=50 uM and 200 ug/ml, and B.subtilis MIC=200 ug/ml), Gram-negative bacterium E.coli (MIC=100 uM and 200 ug/ml) and fungi (B.cinerea MIC=5 uM, S.cerevisiae MIC=128 ug/ml, S.pombe MIC=128 ug/ml, A.nidulans MIC=128 ug/ml, and C.albicans MIC=64-100 uM). Shows cytolytic activity against insect cell lines. Its hemolytic activity is controversial, as Baek and colleagues report no activity while Bea and colleagues note a hemolytic activity. In vivo, peptide injection in the vicinity of the head and thorax of lepidopteran larvae induces feeding disorder followed by death due to starvation. Is weakly lethal when tested on water flies (D.magna), but is not lethal on lady beetles (H.convergens). The sequence is that of Venom peptide 2a from Eumenes pomiformis (Potter wasp).